We begin with the raw amino-acid sequence, 178 residues long: Mediator of RNA polymerase II transcription subunit 28 (178 aa).

Positions 1–25 (MAAPLGGMFSGQQPGPPQPPPGLLG) are disordered. The stretch at 109–145 (QVIKEDVSELRNELQRKDALVQKHLTKLRHWQQVLED) forms a coiled coil.

This sequence belongs to the Mediator complex subunit 28 family. As to quaternary structure, component of the Mediator complex, which is composed of MED1, MED4, MED6, MED7, MED8, MED9, MED10, MED11, MED12, MED13, MED13L, MED14, MED15, MED16, MED17, MED18, MED19, MED20, MED21, MED22, MED23, MED24, MED25, MED26, MED27, MED29, MED30, MED31, CCNC, CDK8 and CDC2L6/CDK11. The MED12, MED13, CCNC and CDK8 subunits form a distinct module termed the CDK8 module. Mediator containing the CDK8 module is less active than Mediator lacking this module in supporting transcriptional activation. Individual preparations of the Mediator complex lacking one or more distinct subunits have been variously termed ARC, CRSP, DRIP, PC2, SMCC and TRAP. Forms a ternary complex with NF2/merlin and GRB2. Binds to actin.

It localises to the nucleus. It is found in the cytoplasm. Its subcellular location is the membrane. Component of the Mediator complex, a coactivator involved in the regulated transcription of nearly all RNA polymerase II-dependent genes. Mediator functions as a bridge to convey information from gene-specific regulatory proteins to the basal RNA polymerase II transcription machinery. Mediator is recruited to promoters by direct interactions with regulatory proteins and serves as a scaffold for the assembly of a functional preinitiation complex with RNA polymerase II and the general transcription factors. May be part of a complex containing NF2/merlin that participates in cellular signaling to the actin cytoskeleton downstream of tyrosine kinase signaling pathways. The sequence is that of Mediator of RNA polymerase II transcription subunit 28 (MED28) from Bos taurus (Bovine).